We begin with the raw amino-acid sequence, 308 residues long: Growth/differentiation factor 15 (308 aa).

Residues 1–29 (MPGQELRTVNGSQMLLVLLVLSWLPHGGA) form the signal peptide. Positions 30–194 (LSLAEASRAS…RPQAARGRRR (165 aa)) are excised as a propeptide. Asn70 carries an N-linked (GlcNAc...) asparagine glycan. Residues 152–177 (APALHLRLSPPPSQSDQLLAESSSAR) are disordered. The span at 165–177 (QSDQLLAESSSAR) shows a compositional bias: polar residues. 4 disulfide bridges follow: Cys203-Cys210, Cys211-Cys274, Cys240-Cys305, and Cys244-Cys307.

This sequence belongs to the TGF-beta family. As to quaternary structure, homodimer; disulfide-linked. Interacts with GFRAL and RET; ligand of GFRAL, which mediates GDF15 internalization and cellular signaling through interaction with RET via the formation of a 2:2:2 ternary complex composed of GDF15, GFRAL and RET. In terms of tissue distribution, detected in plasma (at protein level). Highly expressed in placenta, with lower levels in prostate and colon and some expression in kidney.

The protein resides in the secreted. Functionally, hormone produced in response to various stresses to confer information about those stresses to the brain, and trigger an aversive response, characterized by nausea, vomiting, and/or loss of appetite. The aversive response is both required to reduce continuing exposure to those stresses at the time of exposure and to promote avoidance behavior in the future. Acts by binding to its receptor, GFRAL, activating GFRAL-expressing neurons localized in the area postrema and nucleus tractus solitarius of the brainstem. It then triggers the activation of neurons localized within the parabrachial nucleus and central amygdala, which constitutes part of the 'emergency circuit' that shapes responses to stressful conditions. The GDF15-GFRAL signal induces expression of genes involved in metabolism, such as lipid metabolism in adipose tissues. Required for avoidance behavior in response to food allergens: induced downstream of mast cell activation to promote aversion and minimize harmful effects of exposure to noxious substances. In addition to suppress appetite, also promotes weight loss by enhancing energy expenditure in muscle: acts by increasing calcium futile cycling in muscle. Contributes to the effect of metformin, an anti-diabetic drug, on appetite reduction and weight loss: produced in the kidney in response to metformin treatment, thereby activating the GDF15-GFRAL response, leading to reduced appetite and weight. The contribution of GDF15 to weight loss following metformin treatment is however limited and subject to discussion. Produced in response to anticancer drugs, such as camptothecin or cisplatin, promoting nausea, vomiting and contributing to malnutrition. Overproduced in many cancers, promoting anorexia in cancer (cachexia). Responsible for the risk of nausea and vomiting during pregnancy: high levels of GDF15 during pregnancy, mostly originating from the fetus, are associated with increased nausea and vomiting. Maternal sensitivity to nausea is probably determined by pre-pregnancy exposure to GDF15, women with naturally high level of GDF15 being less susceptible to nausea than women with low levels of GDF15 before pregnancy. Promotes metabolic adaptation in response to systemic inflammation caused by bacterial and viral infections in order to promote tissue tolerance and prevent tissue damage. Required for tissue tolerance in response to myocardial infarction by acting as an inhibitor of leukocyte integring activation, thereby protecting against cardiac rupture. Inhibits growth hormone signaling on hepatocytes. The protein is Growth/differentiation factor 15 of Homo sapiens (Human).